Reading from the N-terminus, the 112-residue chain is PTS system lactose-specific EIIA component (112 aa).

A PTS EIIA type-3 domain is found at 6 to 104 (EEISMVGFAL…TRYMIRMFKR (99 aa)). His80 functions as the Tele-phosphohistidine intermediate in the catalytic mechanism. Position 80 is a phosphohistidine; by HPr (His80). Asp83 is a binding site for Mg(2+).

In terms of assembly, homotrimer. The cofactor is Mg(2+).

The protein resides in the cytoplasm. The phosphoenolpyruvate-dependent sugar phosphotransferase system (sugar PTS), a major carbohydrate active transport system, catalyzes the phosphorylation of incoming sugar substrates concomitantly with their translocation across the cell membrane. The enzyme II LacEF PTS system is involved in lactose transport. This Lacticaseibacillus casei (Lactobacillus casei) protein is PTS system lactose-specific EIIA component.